A 675-amino-acid chain; its full sequence is Rho guanine nucleotide exchange factor 37 (675 aa).

Residues 1 to 26 (MAKHGADEPSSRSGSPDREGRASEDR) are disordered. The 184-residue stretch at 30 to 213 (HQRLAVRELI…QDVNTNINEY (184 aa)) folds into the DH domain. The 202-residue stretch at 254 to 455 (LKQEAGLIPR…LPHHHVPEPA (202 aa)) folds into the BAR domain. SH3 domains follow at residues 506–569 (GPGK…LYHV) and 602–665 (PTMN…RARS).

Functionally, may act as a guanine nucleotide exchange factor (GEF). This is Rho guanine nucleotide exchange factor 37 (ARHGEF37) from Homo sapiens (Human).